Reading from the N-terminus, the 126-residue chain is Small ribosomal subunit protein uS13 (126 aa).

The disordered stretch occupies residues 92 to 126; sequence HRRGLPANGQRTHTNARTRKGPRKGMLQRRPAATK. Positions 105–118 are enriched in basic residues; sequence TNARTRKGPRKGML.

Belongs to the universal ribosomal protein uS13 family. As to quaternary structure, part of the 30S ribosomal subunit. Forms a loose heterodimer with protein S19. Forms two bridges to the 50S subunit in the 70S ribosome.

Located at the top of the head of the 30S subunit, it contacts several helices of the 16S rRNA. In the 70S ribosome it contacts the 23S rRNA (bridge B1a) and protein L5 of the 50S subunit (bridge B1b), connecting the 2 subunits; these bridges are implicated in subunit movement. Contacts the tRNAs in the A and P-sites. This chain is Small ribosomal subunit protein uS13, found in Sorangium cellulosum (strain So ce56) (Polyangium cellulosum (strain So ce56)).